Consider the following 656-residue polypeptide: Pyoverdine export ATP-binding/permease protein PvdT (656 aa).

One can recognise an ABC transporter domain in the interval 6–245; it reads IDLRGIRKSY…SANPAALQAV (240 aa). 43-50 serves as a coordination point for ATP; sequence GASGSGKS. 4 helical membrane-spanning segments follow: residues 284 to 304, 538 to 558, 589 to 609, and 619 to 639; these read ALTL…LAVG, IAAI…LMTV, LSVV…AALL, and LSAV…FGFM.

Belongs to the ABC transporter superfamily. Macrolide exporter (TC 3.A.1.122) family. In terms of assembly, part of the tripartite efflux system PvdRT-OpmQ, which is composed of an inner membrane component with both ATPase and permease domains, PvdT, a periplasmic membrane fusion protein, PvdR, and an outer membrane component, OpmQ.

The protein resides in the cell inner membrane. Part of the tripartite efflux system PvdRT-OpmQ required for the secretion into the extracellular milieu of the siderophore pyoverdine (PVD), which is involved in iron acquisition. This subunit binds PVD and drives its secretion by hydrolyzing ATP. The system is responsible for export of newly synthesized PVD after the final steps of biosynthesis have taken place in the periplasm. It is also responsible for recycling of PVD after internalization of ferri-PVD into the periplasm by the outer-membrane receptor FpvA and release of iron from PVD, thus making PVD available for new cycles of iron uptake. This Pseudomonas syringae pv. tomato (strain ATCC BAA-871 / DC3000) protein is Pyoverdine export ATP-binding/permease protein PvdT.